Here is a 526-residue protein sequence, read N- to C-terminus: Peptide chain release factor 3 (526 aa).

Residues 9-277 form the tr-type G domain; that stretch reads DKRRTFAIIS…GIVEWAPIPQ (269 aa). GTP is bound by residues 18-25, 86-90, and 140-143; these read SHPDAGKT, DTPGH, and NKLD.

It belongs to the TRAFAC class translation factor GTPase superfamily. Classic translation factor GTPase family. PrfC subfamily.

Its subcellular location is the cytoplasm. Increases the formation of ribosomal termination complexes and stimulates activities of RF-1 and RF-2. It binds guanine nucleotides and has strong preference for UGA stop codons. It may interact directly with the ribosome. The stimulation of RF-1 and RF-2 is significantly reduced by GTP and GDP, but not by GMP. This is Peptide chain release factor 3 from Shewanella halifaxensis (strain HAW-EB4).